The chain runs to 445 residues: Tubulin beta-1 chain (445 aa).

Positions 11, 69, 138, 142, 143, 144, 204, and 226 each coordinate GTP. Glu69 is a Mg(2+) binding site. The tract at residues 422–445 (QYQDAGMDDEYGEEYEDEAPAEEE) is disordered. The span at 427-445 (GMDDEYGEEYEDEAPAEEE) shows a compositional bias: acidic residues.

It belongs to the tubulin family. In terms of assembly, dimer of alpha and beta chains. A typical microtubule is a hollow water-filled tube with an outer diameter of 25 nm and an inner diameter of 15 nM. Alpha-beta heterodimers associate head-to-tail to form protofilaments running lengthwise along the microtubule wall with the beta-tubulin subunit facing the microtubule plus end conferring a structural polarity. Microtubules usually have 13 protofilaments but different protofilament numbers can be found in some organisms and specialized cells. Mg(2+) is required as a cofactor.

It localises to the cytoplasm. The protein localises to the cytoskeleton. Functionally, tubulin is the major constituent of microtubules, a cylinder consisting of laterally associated linear protofilaments composed of alpha- and beta-tubulin heterodimers. Microtubules grow by the addition of GTP-tubulin dimers to the microtubule end, where a stabilizing cap forms. Below the cap, tubulin dimers are in GDP-bound state, owing to GTPase activity of alpha-tubulin. This is Tubulin beta-1 chain (TUB1) from Colletotrichum graminicola (Maize anthracnose fungus).